The sequence spans 34 residues: DDIT3 upstream open reading frame protein (34 aa).

Interacts with DDIT3 (isoform 1).

The protein resides in the nucleus. It localises to the cytoplasm. Product of the upstream open reading frame (uORF) of DDIT3/CHOP that is specifically produced in absence of stress, thereby preventing translation of downstream stress effector DDIT3/CHOP. This chain is DDIT3 upstream open reading frame protein, found in Homo sapiens (Human).